Consider the following 925-residue polypeptide: Centrosomal protein of 104 kDa (925 aa).

A coiled-coil region spans residues 209 to 289; it reads EVAQIIRKLD…RAEVYEQLEL (81 aa). 2 HEAT repeats span residues 529–567 and 604–640; these read TIPV…LQII and GFTI…YRQH. Residues 677-725 adopt a coiled-coil conformation; it reads DAEMRARRKAATEEAEKQKKEEIKALQGQLAALKEIQAEVQEKESDAVK. A disordered region spans residues 883 to 925; sequence PALQPGKSSAVAASGPLGSKAGSKIPTPKGGLSKSSSRTYAKR. Residues 915-925 are compositionally biased toward polar residues; sequence SKSSSRTYAKR.

Interacts with CCP110 and CEP97. Interacts with ARMC9, TOGARAM1, CCDC66 and CSPP1.

It is found in the cell projection. The protein resides in the cilium. The protein localises to the cytoplasm. Its subcellular location is the cytoskeleton. It localises to the microtubule organizing center. It is found in the centrosome. The protein resides in the centriole. The protein localises to the spindle pole. Functionally, required for ciliogenesis and for structural integrity at the ciliary tip. The protein is Centrosomal protein of 104 kDa (CEP104) of Homo sapiens (Human).